Here is a 312-residue protein sequence, read N- to C-terminus: Acetyl-coenzyme A carboxylase carboxyl transferase subunit beta (312 aa).

Residues 24–293 (LWIKCPDSGQ…PHADEVAAPP (270 aa)) enclose the CoA carboxyltransferase N-terminal domain. The disordered stretch occupies residues 286–312 (ADEVAAPPPPDVEGPPPAAEPVALPPA). Residues 291–312 (APPPPDVEGPPPAAEPVALPPA) show a composition bias toward pro residues.

The protein belongs to the AccD/PCCB family. Acetyl-CoA carboxylase is a heterohexamer composed of biotin carboxyl carrier protein (AccB), biotin carboxylase (AccC) and two subunits each of ACCase subunit alpha (AccA) and ACCase subunit beta (AccD).

The protein localises to the cytoplasm. It carries out the reaction N(6)-carboxybiotinyl-L-lysyl-[protein] + acetyl-CoA = N(6)-biotinyl-L-lysyl-[protein] + malonyl-CoA. The protein operates within lipid metabolism; malonyl-CoA biosynthesis; malonyl-CoA from acetyl-CoA: step 1/1. Component of the acetyl coenzyme A carboxylase (ACC) complex. Biotin carboxylase (BC) catalyzes the carboxylation of biotin on its carrier protein (BCCP) and then the CO(2) group is transferred by the transcarboxylase to acetyl-CoA to form malonyl-CoA. This is Acetyl-coenzyme A carboxylase carboxyl transferase subunit beta from Afipia carboxidovorans (strain ATCC 49405 / DSM 1227 / KCTC 32145 / OM5) (Oligotropha carboxidovorans).